The sequence spans 239 residues: Myogenic factor 6 (239 aa).

Positions 28 to 59 (PGVSPLYEGNDSPLSPGQDPVPSETGCESSGE) are disordered. The 52-residue stretch at 92–143 (DRRKAATLRERRRLKKINEAFDALKKKTVPNPNQRLPKVEILRSAINYIEKL) folds into the bHLH domain. Positions 182-196 (CQSWQENPDHSSSQM) are enriched in polar residues. The tract at residues 182–239 (CQSWQENPDHSSSQMAGHREGAVLESSESSSLRRLSSIVDSISTEEPKARCPSQISEK) is disordered. The span at 204-223 (VLESSESSSLRRLSSIVDSI) shows a compositional bias: low complexity.

In terms of assembly, efficient DNA binding requires dimerization with another bHLH protein.

The protein localises to the nucleus. Its function is as follows. Involved in muscle differentiation (myogenic factor). Induces fibroblasts to differentiate into myoblasts. Probable sequence specific DNA-binding protein. The sequence is that of Myogenic factor 6 (myf6) from Danio rerio (Zebrafish).